The sequence spans 189 residues: Peptidyl-tRNA hydrolase (189 aa).

Y15 serves as a coordination point for tRNA. H20 acts as the Proton acceptor in catalysis. TRNA is bound by residues F66, N68, and N114.

Belongs to the PTH family. As to quaternary structure, monomer.

The protein localises to the cytoplasm. The catalysed reaction is an N-acyl-L-alpha-aminoacyl-tRNA + H2O = an N-acyl-L-amino acid + a tRNA + H(+). Functionally, hydrolyzes ribosome-free peptidyl-tRNAs (with 1 or more amino acids incorporated), which drop off the ribosome during protein synthesis, or as a result of ribosome stalling. In terms of biological role, catalyzes the release of premature peptidyl moieties from peptidyl-tRNA molecules trapped in stalled 50S ribosomal subunits, and thus maintains levels of free tRNAs and 50S ribosomes. This Streptococcus pyogenes serotype M6 (strain ATCC BAA-946 / MGAS10394) protein is Peptidyl-tRNA hydrolase.